We begin with the raw amino-acid sequence, 284 residues long: 4-diphosphocytidyl-2-C-methyl-D-erythritol kinase (284 aa).

Residue lysine 14 is part of the active site. Position 98-108 (98-108 (PMGGGLGGGSS)) interacts with ATP. Residue aspartate 140 is part of the active site.

It belongs to the GHMP kinase family. IspE subfamily.

The catalysed reaction is 4-CDP-2-C-methyl-D-erythritol + ATP = 4-CDP-2-C-methyl-D-erythritol 2-phosphate + ADP + H(+). Its pathway is isoprenoid biosynthesis; isopentenyl diphosphate biosynthesis via DXP pathway; isopentenyl diphosphate from 1-deoxy-D-xylulose 5-phosphate: step 3/6. Functionally, catalyzes the phosphorylation of the position 2 hydroxy group of 4-diphosphocytidyl-2C-methyl-D-erythritol. This chain is 4-diphosphocytidyl-2-C-methyl-D-erythritol kinase, found in Shewanella putrefaciens (strain CN-32 / ATCC BAA-453).